The sequence spans 654 residues: Hepatocyte growth factor activator serine proteases (654 aa).

Positions Met-1–Pro-33 are cleaved as a signal peptide. The interval Gln-34–Thr-100 is disordered. A propeptide spans Gln-34–Arg-370 (removed in mature form). Residues Asn-38 and Asn-46 are each glycosylated (N-linked (GlcNAc...) asparagine). The span at Pro-57 to Leu-81 shows a compositional bias: low complexity. One can recognise a Fibronectin type-II domain in the interval Val-101–Gln-148. Disulfide bonds link Cys-106–Cys-131, Cys-120–Cys-146, Cys-162–Cys-173, Cys-167–Cys-184, Cys-186–Cys-195, Cys-200–Cys-228, Cys-226–Cys-235, Cys-243–Cys-254, Cys-248–Cys-265, Cys-267–Cys-276, Cys-284–Cys-365, Cys-305–Cys-347, Cys-336–Cys-360, Cys-393–Cys-520, Cys-431–Cys-447, Cys-439–Cys-509, Cys-534–Cys-603, Cys-566–Cys-582, and Cys-593–Cys-621. The EGF-like 1 domain occupies Ala-158–Asp-196. The region spanning Glu-198–Thr-238 is the Fibronectin type-I domain. The EGF-like 2 domain maps to Arg-239–Asn-277. Residues Arg-283–Cys-365 form the Kringle domain. A glycan (N-linked (GlcNAc...) asparagine) is linked at Asn-288. Residues Ile-407–Trp-645 form the Peptidase S1 domain. The active-site Charge relay system is the His-446. Residues Asn-467 and Asn-491 are each glycosylated (N-linked (GlcNAc...) asparagine). Asp-496 serves as the catalytic Charge relay system. N-linked (GlcNAc...) asparagine glycosylation occurs at Asn-545. Residue Ser-597 is the Charge relay system of the active site.

The protein belongs to the peptidase S1 family. As to quaternary structure, heterodimer of a short chain and a long chain linked by a disulfide bond. In terms of processing, the active form of HGFAC presents in the serum is derived from the COOH-terminal region of the precursor by the cleavage of bonds between Arg-370 and Ile-371 and Arg-406 and Ile-407. Liver.

Its subcellular location is the secreted. In terms of biological role, serine protease that hydrolyzes the inactive zymogen hepatocyte growth factor (HGFsc) to an activated disulfide-linked heterodimer, then initiating hepatocyte growth factor receptor signaling pathway. This is Hepatocyte growth factor activator serine proteases (HGFAC) from Canis lupus familiaris (Dog).